The sequence spans 337 residues: UDP-3-O-acylglucosamine N-acyltransferase 1 (337 aa).

Residue His-238 is the Proton acceptor of the active site.

It belongs to the transferase hexapeptide repeat family. LpxD subfamily. In terms of assembly, homotrimer.

The catalysed reaction is a UDP-3-O-[(3R)-3-hydroxyacyl]-alpha-D-glucosamine + a (3R)-hydroxyacyl-[ACP] = a UDP-2-N,3-O-bis[(3R)-3-hydroxyacyl]-alpha-D-glucosamine + holo-[ACP] + H(+). The protein operates within bacterial outer membrane biogenesis; LPS lipid A biosynthesis. In terms of biological role, catalyzes the N-acylation of UDP-3-O-acylglucosamine using 3-hydroxyacyl-ACP as the acyl donor. Is involved in the biosynthesis of lipid A, a phosphorylated glycolipid that anchors the lipopolysaccharide to the outer membrane of the cell. In Koribacter versatilis (strain Ellin345), this protein is UDP-3-O-acylglucosamine N-acyltransferase 1.